Consider the following 424-residue polypeptide: Histidine--tRNA ligase (424 aa).

Belongs to the class-II aminoacyl-tRNA synthetase family. Homodimer.

Its subcellular location is the cytoplasm. It catalyses the reaction tRNA(His) + L-histidine + ATP = L-histidyl-tRNA(His) + AMP + diphosphate + H(+). The sequence is that of Histidine--tRNA ligase from Salmonella arizonae (strain ATCC BAA-731 / CDC346-86 / RSK2980).